A 469-amino-acid chain; its full sequence is Glutamate--tRNA ligase 1 (469 aa).

The 'HIGH' region signature appears at 11–21; that stretch reads PSPTGHLHLGG. The short motif at 238-242 is the 'KMSKS' region element; that stretch reads KLSKR. Lysine 241 provides a ligand contact to ATP.

The protein belongs to the class-I aminoacyl-tRNA synthetase family. Glutamate--tRNA ligase type 1 subfamily. Monomer.

The protein resides in the cytoplasm. The catalysed reaction is tRNA(Glu) + L-glutamate + ATP = L-glutamyl-tRNA(Glu) + AMP + diphosphate. Functionally, catalyzes the attachment of glutamate to tRNA(Glu) in a two-step reaction: glutamate is first activated by ATP to form Glu-AMP and then transferred to the acceptor end of tRNA(Glu). The chain is Glutamate--tRNA ligase 1 from Ehrlichia canis (strain Jake).